A 711-amino-acid chain; its full sequence is MRYVVSPQLVLYVEKGQKIKRVLYLTPYGVLDDKSPIYYFLSTHLKITDPEIHRRHILLTLKISQLKGYLCNLLDIRNDIIIYSHKNNLEYSYVDNTIFNPFVHTQKKTLIKSDGFLYNIYPGACDFLVIWVANADDTSIAEFGSYEDVDVNILKFETRLLEVFDNLDLDMNIESKFNNIFRTNLKFTGLRKLIKKINELNGLYYKSLLYKSDEYFINLTGNKFILTDERLNLTVWDPDGVVTFSSDGDTITINNVKLFTSLLTDIDLQMERIKGDVTYKIFLSTPITSRIKLNIETSFIFVETATNNILLSADKRISIILAKNHISIKVKNYIPNIEKYFTFLVIAINSMFNNIQQASDFTKIETVYWSRICQNTKNKHRKPVIVSSLDDNMEKVSDNFYKSSTKEVFINSSGIMFSCLDPLNKYNYVGFLSIFYRLQKMCIPCCFLKNQSHTETFSSCVHQKEITSDVINPYILNFGKVVTKSKISFLPIIFDSFFNKGVKIIFEQDNKRLKETIGYHVVKSCDEDIKRLRTISDIIMFVNEDKNILIAEDIIYFPMNYADIGTRVYILIQEIVHEVIVVKKHMTKDLIEVCPPNYKLVKNLFPRQTKFATIRSDSGMELTTDGFLVDGKEFNVDLSSNYVAFTKNITTPYTLSKYFAPLFKYVITESKNRFMKTWLINTMLRLGIDLDLDTNILPKLEKYYPNHGKSV.

It belongs to the poxviridae VETF large subunit family. As to quaternary structure, heterodimer of a 70 kDa and a 82 kDa subunit. Part of the early transcription complex composed of ETF, RAP94, and the DNA-directed RNA polymerase.

In terms of biological role, acts with RNA polymerase to initiate transcription from early gene promoters. Is recruited by the RPO-associated protein of 94 kDa (RAP94) to form the early transcription complex, which also contains the core RNA polymerase. ETF heterodimer binds to early gene promoters. The sequence is that of Early transcription factor 82 kDa subunit (VETFL) from Oryctolagus cuniculus (Rabbit).